A 435-amino-acid chain; its full sequence is ATP-dependent protease ATPase subunit HslU (435 aa).

Residues I18, G60–E65, D248, E313, and R385 each bind ATP.

This sequence belongs to the ClpX chaperone family. HslU subfamily. In terms of assembly, a double ring-shaped homohexamer of HslV is capped on each side by a ring-shaped HslU homohexamer. The assembly of the HslU/HslV complex is dependent on binding of ATP.

It localises to the cytoplasm. ATPase subunit of a proteasome-like degradation complex; this subunit has chaperone activity. The binding of ATP and its subsequent hydrolysis by HslU are essential for unfolding of protein substrates subsequently hydrolyzed by HslV. HslU recognizes the N-terminal part of its protein substrates and unfolds these before they are guided to HslV for hydrolysis. This Roseobacter denitrificans (strain ATCC 33942 / OCh 114) (Erythrobacter sp. (strain OCh 114)) protein is ATP-dependent protease ATPase subunit HslU.